A 282-amino-acid polypeptide reads, in one-letter code: Pantothenate synthetase (282 aa).

Residue 30–37 coordinates ATP; it reads MGYLHEGH. Histidine 37 functions as the Proton donor in the catalytic mechanism. Residue glutamine 61 participates in (R)-pantoate binding. Glutamine 61 lines the beta-alanine pocket. Position 147–150 (147–150) interacts with ATP; the sequence is GQKD. Glutamine 153 serves as a coordination point for (R)-pantoate. Residues valine 176 and 184–187 each bind ATP; that span reads MSSR.

This sequence belongs to the pantothenate synthetase family. In terms of assembly, homodimer.

Its subcellular location is the cytoplasm. It catalyses the reaction (R)-pantoate + beta-alanine + ATP = (R)-pantothenate + AMP + diphosphate + H(+). The protein operates within cofactor biosynthesis; (R)-pantothenate biosynthesis; (R)-pantothenate from (R)-pantoate and beta-alanine: step 1/1. Its function is as follows. Catalyzes the condensation of pantoate with beta-alanine in an ATP-dependent reaction via a pantoyl-adenylate intermediate. The chain is Pantothenate synthetase from Pelotomaculum thermopropionicum (strain DSM 13744 / JCM 10971 / SI).